Here is a 265-residue protein sequence, read N- to C-terminus: Sulfur carrier protein FdhD (265 aa).

Catalysis depends on Cys107, which acts as the Cysteine persulfide intermediate.

It belongs to the FdhD family.

Its subcellular location is the cytoplasm. Its function is as follows. Required for formate dehydrogenase (FDH) activity. Acts as a sulfur carrier protein that transfers sulfur from IscS to the molybdenum cofactor prior to its insertion into FDH. This chain is Sulfur carrier protein FdhD, found in Staphylococcus aureus (strain bovine RF122 / ET3-1).